Consider the following 260-residue polypeptide: HTH-type transcriptional repressor NanR (260 aa).

Residues 1-20 (MNPFDSQSEDASDAIGRSLG) are disordered. Residues 27 to 95 (KKLSEMVEEE…NGERARVSRP (69 aa)) form the HTH gntR-type domain. Residues 55–74 (ERELMAFFNVGRPSVREALA) constitute a DNA-binding region (H-T-H motif).

It belongs to the NanR family.

Transcriptional repressor that controls expression of the genes required for the catabolism of sialic acids. The sequence is that of HTH-type transcriptional repressor NanR from Cronobacter sakazakii (strain ATCC BAA-894) (Enterobacter sakazakii).